Reading from the N-terminus, the 352-residue chain is Photosystem II D2 protein (352 aa).

The residue at position 2 (Thr2) is an N-acetylthreonine. Phosphothreonine is present on Thr2. Residues 40-60 (CAYFALGGWLTGTTFVTSWYT) traverse the membrane as a helical segment. Residue His117 participates in chlorophyll a binding. The chain crosses the membrane as a helical span at residues 124 to 140 (GFMLRQFEIARAVKIRP). Residues Gln129 and Asn142 each coordinate pheophytin a. The helical transmembrane segment at 152-165 (VFVSVFLIYPLGQA) threads the bilayer. His197 serves as a coordination point for chlorophyll a. The helical transmembrane segment at 207 to 227 (AALLCAIHGATVENTLFEDGD) threads the bilayer. Positions 214 and 261 each coordinate a plastoquinone. Fe cation is bound at residue His214. His268 is a Fe cation binding site. Residues 278-294 (GLWMSALGVVGLALNLR) form a helical membrane-spanning segment.

This sequence belongs to the reaction center PufL/M/PsbA/D family. PSII is composed of 1 copy each of membrane proteins PsbA, PsbB, PsbC, PsbD, PsbE, PsbF, PsbH, PsbI, PsbJ, PsbK, PsbL, PsbM, PsbT, PsbX, PsbY, PsbZ, Psb30/Ycf12, at least 3 peripheral proteins of the oxygen-evolving complex and a large number of cofactors. It forms dimeric complexes. The D1/D2 heterodimer binds P680, chlorophylls that are the primary electron donor of PSII, and subsequent electron acceptors. It shares a non-heme iron and each subunit binds pheophytin, quinone, additional chlorophylls, carotenoids and lipids. There is also a Cl(-1) ion associated with D1 and D2, which is required for oxygen evolution. The PSII complex binds additional chlorophylls, carotenoids and specific lipids. is required as a cofactor.

It localises to the plastid. Its subcellular location is the chloroplast thylakoid membrane. The catalysed reaction is 2 a plastoquinone + 4 hnu + 2 H2O = 2 a plastoquinol + O2. In terms of biological role, photosystem II (PSII) is a light-driven water:plastoquinone oxidoreductase that uses light energy to abstract electrons from H(2)O, generating O(2) and a proton gradient subsequently used for ATP formation. It consists of a core antenna complex that captures photons, and an electron transfer chain that converts photonic excitation into a charge separation. The D1/D2 (PsbA/PsbD) reaction center heterodimer binds P680, the primary electron donor of PSII as well as several subsequent electron acceptors. D2 is needed for assembly of a stable PSII complex. The sequence is that of Photosystem II D2 protein from Tupiella akineta (Green alga).